Reading from the N-terminus, the 465-residue chain is Transcriptional protein swt1 (465 aa).

The region spanning 70–190 (GLFVLDTNFL…LLSDDKNLSI (121 aa)) is the PINc domain.

This sequence belongs to the SWT1 family.

The protein localises to the cytoplasm. It is found in the nucleus. Its function is as follows. Involved in transcription. In Schizosaccharomyces pombe (strain 972 / ATCC 24843) (Fission yeast), this protein is Transcriptional protein swt1.